The sequence spans 494 residues: Membrane-bound lytic murein transglycosylase F 1 (494 aa).

An N-terminal signal peptide occupies residues 1–24 (MRIMAVRLVAGAITLALMAYAWLA). A non-LT domain region spans residues 25-270 (WERARDPEPI…TLLEEHFGHL (246 aa)). The LT domain stretch occupies residues 271 to 494 (GRFDYVGFRA…APLPADPPAD (224 aa)). Glutamate 317 is a catalytic residue. A disordered region spans residues 464–494 (QVPAGEALGEPPLPTPPAPPGAPLPADPPAD). The span at 474-494 (PPLPTPPAPPGAPLPADPPAD) shows a compositional bias: pro residues.

It in the N-terminal section; belongs to the bacterial solute-binding protein 3 family. In the C-terminal section; belongs to the transglycosylase Slt family.

It localises to the cell outer membrane. It carries out the reaction Exolytic cleavage of the (1-&gt;4)-beta-glycosidic linkage between N-acetylmuramic acid (MurNAc) and N-acetylglucosamine (GlcNAc) residues in peptidoglycan, from either the reducing or the non-reducing ends of the peptidoglycan chains, with concomitant formation of a 1,6-anhydrobond in the MurNAc residue.. Functionally, murein-degrading enzyme that degrades murein glycan strands and insoluble, high-molecular weight murein sacculi, with the concomitant formation of a 1,6-anhydromuramoyl product. Lytic transglycosylases (LTs) play an integral role in the metabolism of the peptidoglycan (PG) sacculus. Their lytic action creates space within the PG sacculus to allow for its expansion as well as for the insertion of various structures such as secretion systems and flagella. The sequence is that of Membrane-bound lytic murein transglycosylase F 1 from Alkalilimnicola ehrlichii (strain ATCC BAA-1101 / DSM 17681 / MLHE-1).